A 363-amino-acid chain; its full sequence is Biotin synthase (363 aa).

Residues 38 to 266 (NTVQVSTLLS…ETQVRLSAGR (229 aa)) form the Radical SAM core domain. Positions 53, 57, and 60 each coordinate [4Fe-4S] cluster. 4 residues coordinate [2Fe-2S] cluster: cysteine 97, cysteine 129, cysteine 189, and arginine 261. The disordered stretch occupies residues 315–363 (KAFEKKSQPESVAAEKSKYQSQGEKPRWSRPEHKIDRNLEAQQNAKTKA). Over residues 316-353 (AFEKKSQPESVAAEKSKYQSQGEKPRWSRPEHKIDRNL) the composition is skewed to basic and acidic residues. Residues 354 to 363 (EAQQNAKTKA) show a composition bias toward polar residues.

It belongs to the radical SAM superfamily. Biotin synthase family. In terms of assembly, homodimer. It depends on [4Fe-4S] cluster as a cofactor. Requires [2Fe-2S] cluster as cofactor.

The catalysed reaction is (4R,5S)-dethiobiotin + (sulfur carrier)-SH + 2 reduced [2Fe-2S]-[ferredoxin] + 2 S-adenosyl-L-methionine = (sulfur carrier)-H + biotin + 2 5'-deoxyadenosine + 2 L-methionine + 2 oxidized [2Fe-2S]-[ferredoxin]. The protein operates within cofactor biosynthesis; biotin biosynthesis; biotin from 7,8-diaminononanoate: step 2/2. Functionally, catalyzes the conversion of dethiobiotin (DTB) to biotin by the insertion of a sulfur atom into dethiobiotin via a radical-based mechanism. The protein is Biotin synthase of Christiangramia forsetii (strain DSM 17595 / CGMCC 1.15422 / KT0803) (Gramella forsetii).